The primary structure comprises 95 residues: Large ribosomal subunit protein uL23 (95 aa).

Belongs to the universal ribosomal protein uL23 family. In terms of assembly, part of the 50S ribosomal subunit. Contacts protein L29, and trigger factor when it is bound to the ribosome.

Its function is as follows. One of the early assembly proteins it binds 23S rRNA. One of the proteins that surrounds the polypeptide exit tunnel on the outside of the ribosome. Forms the main docking site for trigger factor binding to the ribosome. The protein is Large ribosomal subunit protein uL23 of Heliobacterium modesticaldum (strain ATCC 51547 / Ice1).